We begin with the raw amino-acid sequence, 80 residues long: Acyl carrier protein (80 aa).

Positions 4–79 (EAILEKVRSI…DAVKYIEDKQ (76 aa)) constitute a Carrier domain. Ser-39 bears the O-(pantetheine 4'-phosphoryl)serine mark.

It belongs to the acyl carrier protein (ACP) family. Post-translationally, 4'-phosphopantetheine is transferred from CoA to a specific serine of apo-ACP by AcpS. This modification is essential for activity because fatty acids are bound in thioester linkage to the sulfhydryl of the prosthetic group.

It is found in the cytoplasm. It functions in the pathway lipid metabolism; fatty acid biosynthesis. In terms of biological role, carrier of the growing fatty acid chain in fatty acid biosynthesis. The protein is Acyl carrier protein of Parasynechococcus marenigrum (strain WH8102).